A 208-amino-acid polypeptide reads, in one-letter code: Outer-membrane lipoprotein LolB (208 aa).

An N-terminal signal peptide occupies residues 1–23; that stretch reads MKPIQKLSLFRLLPLSCVLLLTA. Cysteine 24 carries N-palmitoyl cysteine lipidation. Cysteine 24 carries the S-diacylglycerol cysteine lipid modification.

Belongs to the LolB family. Monomer.

It localises to the cell outer membrane. Its function is as follows. Plays a critical role in the incorporation of lipoproteins in the outer membrane after they are released by the LolA protein. The protein is Outer-membrane lipoprotein LolB of Photorhabdus laumondii subsp. laumondii (strain DSM 15139 / CIP 105565 / TT01) (Photorhabdus luminescens subsp. laumondii).